Consider the following 786-residue polypeptide: Endonuclease MutS2 (786 aa).

334–341 (GPNTGGKT) is an ATP binding site. The Smr domain occupies 711–786 (LDLRGERYEN…GNGATVVYFK (76 aa)).

This sequence belongs to the DNA mismatch repair MutS family. MutS2 subfamily. In terms of assembly, homodimer. Binds to stalled ribosomes, contacting rRNA.

In terms of biological role, endonuclease that is involved in the suppression of homologous recombination and thus may have a key role in the control of bacterial genetic diversity. Functionally, acts as a ribosome collision sensor, splitting the ribosome into its 2 subunits. Detects stalled/collided 70S ribosomes which it binds and splits by an ATP-hydrolysis driven conformational change. Acts upstream of the ribosome quality control system (RQC), a ribosome-associated complex that mediates the extraction of incompletely synthesized nascent chains from stalled ribosomes and their subsequent degradation. Probably generates substrates for RQC. The protein is Endonuclease MutS2 of Ligilactobacillus salivarius (strain UCC118) (Lactobacillus salivarius).